Consider the following 657-residue polypeptide: Receptor-type tyrosine-protein phosphatase R (657 aa).

Positions M1–C21 are cleaved as a signal peptide. Residues F22–G227 are Extracellular-facing. O-linked (Xyl...) (chondroitin sulfate) serine glycosylation is present at S23. A glycan (N-linked (GlcNAc...) asparagine) is linked at N129. Residues F228–L248 form a helical membrane-spanning segment. At Y249 to Q657 the chain is on the cytoplasmic side. S272 is subject to Phosphoserine. S339 is modified (phosphoserine; by PKA). The region spanning L393–Y647 is the Tyrosine-protein phosphatase domain. Substrate-binding positions include D554, C588–R594, and Q632. The Phosphocysteine intermediate role is filled by C588.

It belongs to the protein-tyrosine phosphatase family. Receptor class 7 subfamily. In terms of assembly, interacts with MAPKs. In terms of tissue distribution, detected in cerebrospinal fluid (at protein level). Expressed in brain, placenta, small intestine, stomach, uterus and weakly in the prostate. Isoform alpha has been observed only in the brain. Isoform gamma is expressed in brain, placenta and uterus. Isoform delta is expressed in brain, kidney, placenta, prostate, small intestine and uterus.

It is found in the secreted. The protein resides in the cell membrane. The protein localises to the cytoplasm. Its subcellular location is the perinuclear region. The enzyme catalyses O-phospho-L-tyrosyl-[protein] + H2O = L-tyrosyl-[protein] + phosphate. Functionally, sequesters mitogen-activated protein kinases (MAPKs) such as MAPK1, MAPK3 and MAPK14 in the cytoplasm in an inactive form. The MAPKs bind to a dephosphorylated kinase interacting motif, phosphorylation of which by the protein kinase A complex releases the MAPKs for activation and translocation into the nucleus. The polypeptide is Receptor-type tyrosine-protein phosphatase R (PTPRR) (Homo sapiens (Human)).